The chain runs to 272 residues: Plastid division protein PDV1 (272 aa).

The Cytoplasmic portion of the chain corresponds to 1-206 (MGEMEIEEIE…KRALGFNHVK (206 aa)). The disordered stretch occupies residues 40 to 61 (KPSNRSEKRKNPHGNSGEDKRP). Positions 78–102 (IQEAKSLNAIRTALENLEDQLEFFH) form a coiled coil. A helical membrane pass occupies residues 207–225 (GVLGNAAIFAISVVAMLHL). Over 226 to 272 (HQVATSEHHLQKKEDRFYRSQQRKTYGRDKSSADRSLDHLDVMMARG) the chain is Chloroplast intermembrane.

In terms of assembly, interacts (via C-terminus) with CDP1/PARC6 (via C-terminus). Interacts with ARC5/DRP5B. In terms of tissue distribution, expressed in young developing leaves, root tips, shoot apices, and flower buds (sepals, petals, stamens, and pistils), but not in developed tissues.

Its subcellular location is the plastid. It localises to the chloroplast outer membrane. Component of the plastid division machinery. Required to mediate the dissociation of ARC5/DRP5B from plastid outer envelope membranes (OEMs) at the midplastid constriction site in the cytoplasm, thus triggering ARC5/DRP5B ring turnover at the chloroplast division site. Binding to phosphatidylinositol 4-phosphate (PI4P) modulates negatively chloroplast division. The sequence is that of Plastid division protein PDV1 from Arabidopsis thaliana (Mouse-ear cress).